The primary structure comprises 185 residues: Elongation factor P (185 aa).

Belongs to the elongation factor P family.

It localises to the cytoplasm. The protein operates within protein biosynthesis; polypeptide chain elongation. Functionally, involved in peptide bond synthesis. Stimulates efficient translation and peptide-bond synthesis on native or reconstituted 70S ribosomes in vitro. Probably functions indirectly by altering the affinity of the ribosome for aminoacyl-tRNA, thus increasing their reactivity as acceptors for peptidyl transferase. The protein is Elongation factor P of Thermosipho africanus (strain TCF52B).